We begin with the raw amino-acid sequence, 113 residues long: Class I hydrophobin POH1 (113 aa).

The signal sequence occupies residues 1-26; that stretch reads MFSIRISTVVLAASALLAVAIPMTNT. Cystine bridges form between cysteine 31/cysteine 93, cysteine 38/cysteine 87, cysteine 39/cysteine 74, and cysteine 94/cysteine 107.

The protein belongs to the fungal hydrophobin family. In terms of assembly, self-assembles to form functional amyloid fibrils called rodlets. Self-assembly into fibrillar rodlets occurs spontaneously at hydrophobic:hydrophilic interfaces and the rodlets further associate laterally to form amphipathic monolayers. In terms of tissue distribution, expressed in the fruiting bodies but not in vegetative mycelium.

Its subcellular location is the secreted. The protein resides in the cell wall. Its function is as follows. Aerial growth, conidiation, and dispersal of filamentous fungi in the environment rely upon a capability of their secreting small amphipathic proteins called hydrophobins (HPBs) with low sequence identity. Class I can self-assemble into an outermost layer of rodlet bundles on aerial cell surfaces, conferring cellular hydrophobicity that supports fungal growth, development and dispersal; whereas Class II form highly ordered films at water-air interfaces through intermolecular interactions but contribute nothing to the rodlet structure. POH1 is a class I hydrophobin that is involved in the formation of mycelium knots and subsequent fruiting bodies. This Pleurotus ostreatus (Oyster mushroom) protein is Class I hydrophobin POH1.